We begin with the raw amino-acid sequence, 785 residues long: Cadherin-7 (785 aa).

Residues 1 to 27 (MKLGKVEFCHFLQLIALFLCFSGMSQA) form the signal peptide. A propeptide spanning residues 28 to 47 (ELSRSRSKPYFQSGRSRTKR) is cleaved from the precursor. Residues 28–607 (ELSRSRSKPY…AYVLPAGLST (580 aa)) lie on the Extracellular side of the membrane. Cadherin domains lie at 49–153 (WVWN…EPKF), 154–262 (LDGP…PPRF), 263–377 (PRRS…PPVF), 378–482 (SSPL…APEF), and 482–599 (FAMD…AEAY). Asn449 and Asn530 each carry an N-linked (GlcNAc...) asparagine glycan. Residues 608 to 628 (GALIAILACVLTLLVLILLIV) traverse the membrane as a helical segment. Topologically, residues 629–785 (TMRRRKKEPL…YGTGQESLYS (157 aa)) are cytoplasmic.

The protein resides in the cell membrane. In terms of biological role, cadherins are calcium-dependent cell adhesion proteins. They preferentially interact with themselves in a homophilic manner in connecting cells; cadherins may thus contribute to the sorting of heterogeneous cell types. The chain is Cadherin-7 (CDH7) from Homo sapiens (Human).